Consider the following 569-residue polypeptide: Putative potassium-transporting ATPase ATP-binding subunit (569 aa).

Transmembrane regions (helical) follow at residues 34 to 54 (PVMF…LAMV) and 58 to 78 (IAGS…TVLF). D194 (4-aspartylphosphate intermediate) is an active-site residue. ATP is bound by residues D231, E235, 264-271 (FTAQSRMS), and K282. Mg(2+) contacts are provided by D405 and D409. The next 3 helical transmembrane spans lie at 475–495 (FAII…LNVM), 503–523 (AILS…PLAL), and 543–563 (IYGL…DVLL).

Belongs to the cation transport ATPase (P-type) (TC 3.A.3) family. Type IA subfamily. As to quaternary structure, the system is composed of three essential subunits: KdpA, KdpB and KdpC.

The protein resides in the cell inner membrane. It catalyses the reaction K(+)(out) + ATP + H2O = K(+)(in) + ADP + phosphate + H(+). Its function is as follows. Part of the high-affinity ATP-driven potassium transport (or Kdp) system, which catalyzes the hydrolysis of ATP coupled with the electrogenic transport of potassium into the cytoplasm. This subunit is responsible for energy coupling to the transport system and for the release of the potassium ions to the cytoplasm. The polypeptide is Putative potassium-transporting ATPase ATP-binding subunit (Salmonella typhi).